Here is a 1836-residue protein sequence, read N- to C-terminus: InaD-like protein (1836 aa).

The L27 domain maps to Met-1–Ser-65. 3 PDZ domains span residues Tyr-134–Val-221, Asp-248–Pro-328, and Asn-365–Lys-453. A phosphoserine mark is found at Ser-455, Ser-459, and Ser-482. Polar residues predominate over residues Leu-456–Ser-466. Positions Leu-456–Glu-492 are disordered. The PDZ 4 domain maps to Asp-555 to Leu-641. Residue Ser-647 is modified to Phosphoserine. PDZ domains lie at Thr-687 to Pro-773 and Pro-1074 to Ser-1166. Residues Val-1173 to Asn-1191 are compositionally biased toward polar residues. The segment at Val-1173–Lys-1232 is disordered. Residues Ala-1203–Arg-1214 are compositionally biased toward pro residues. Residue Ser-1217 is modified to Phosphoserine. Over residues Asp-1219–Ala-1228 the composition is skewed to acidic residues. In terms of domain architecture, PDZ 7 spans Leu-1245–Arg-1328. The segment at Phe-1341–Gln-1448 is disordered. The span at Pro-1372–Asp-1383 shows a compositional bias: basic and acidic residues. Composition is skewed to polar residues over residues Tyr-1415–Ile-1426 and Cys-1434–Gln-1448. PDZ domains follow at residues Glu-1472–Arg-1555 and Val-1568–Arg-1650. Thr-1545 is modified (phosphothreonine). A disordered region spans residues Ala-1657–Arg-1678. A PDZ 10 domain is found at Pro-1709–Ala-1795. The tract at residues Ser-1813–Asp-1836 is disordered.

In terms of assembly, forms a ternary complex with PALS1 and CRB1. Component of a complex whose core is composed of ARHGAP17, AMOT, PALS1, INADL/PATJ and PARD3/PAR3. Forms a heterotrimeric complex composed of MMP5, LIN7B and PATJ; the N-terminal L27 domain of PALS1 interacts with the L27 domain of PATJ and the C-terminal L27 domain of PALS1 interacts with the L27 domain of LIN7B. Component of a complex composed of CRB3, PALS1 and PATJ. As part of the Crumbs complex; interacts with WWP1, the interaction is enhanced by AMOTL2 and facilitates WWP1 localization to the plasma membrane. The Crumbs complex promotes monoubiquitination of AMOTL2 by WWP1, which activates the Hippo signaling pathway. Interacts (via N-terminus) with PALS1/PALS (via PDZ domain). Interacts with TJP3/ZO-3 and CLDN1/claudin-1. Interacts with ASIC3, KCNJ10, KCNJ15, GRIN2A, GRIN2B, GRIN2C, GRIN2D, NLGN2, and HTR2A. Interacts with MPP7. Directly interacts with HTR4. Interacts (via PDZ domain 8) with WWC1 (via the ADDV motif). Interacts with SLC6A4. Interacts (via C-terminus) with ARHGEF18. Interacts with NPHP1. Interacts with PARD3/PAR3. Interacts (via PDZ1-6 domains) with TJP1/ZO1; the interaction is required for attachment and extension of TJP1/ZO1 condensates along the apical cell interface. As to expression, abundantly expressed in germ cells, also expressed in testes and seminiferous tubules, with faint expression in Sertoli cells (at protein level).

Its subcellular location is the cell junction. It localises to the tight junction. The protein localises to the apical cell membrane. It is found in the cytoplasm. The protein resides in the perinuclear region. Functionally, scaffolding protein that facilitates the localization of proteins to the cell membrane. Required for the correct formation of tight junctions and epithelial apico-basal polarity. Acts (via its L27 domain) as an apical connector and elongation factor for multistranded TJP1/ZO1 condensates that form a tight junction belt, thereby required for the formation of the tight junction-mediated cell barrier. Positively regulates epithelial cell microtubule elongation and cell migration, possibly via facilitating localization of PRKCI/aPKC and PAR3D/PAR3 at the leading edge of migrating cells. Plays a role in the correct reorientation of the microtubule-organizing center during epithelial migration. May regulate the surface expression and/or function of ASIC3 in sensory neurons. May recruit ARHGEF18 to apical cell-cell boundaries. The polypeptide is InaD-like protein (Rattus norvegicus (Rat)).